We begin with the raw amino-acid sequence, 217 residues long: UPF0502 protein VF_A0604 (217 aa).

Belongs to the UPF0502 family.

In Aliivibrio fischeri (strain ATCC 700601 / ES114) (Vibrio fischeri), this protein is UPF0502 protein VF_A0604.